A 311-amino-acid chain; its full sequence is Homoserine O-acetyltransferase (311 aa).

Cys142 acts as the Acyl-thioester intermediate in catalysis. Residues Lys163 and Ser192 each contribute to the substrate site. His235 functions as the Proton acceptor in the catalytic mechanism. Glu237 is an active-site residue. Residue Arg249 participates in substrate binding.

Belongs to the MetA family.

The protein resides in the cytoplasm. It catalyses the reaction L-homoserine + acetyl-CoA = O-acetyl-L-homoserine + CoA. It functions in the pathway amino-acid biosynthesis; L-methionine biosynthesis via de novo pathway; O-acetyl-L-homoserine from L-homoserine: step 1/1. Transfers an acetyl group from acetyl-CoA to L-homoserine, forming acetyl-L-homoserine. In Lysinibacillus sphaericus (strain C3-41), this protein is Homoserine O-acetyltransferase.